We begin with the raw amino-acid sequence, 421 residues long: Serine hydroxymethyltransferase (421 aa).

Residues L123 and 127–129 contribute to the (6S)-5,6,7,8-tetrahydrofolate site; that span reads GHL. The residue at position 232 (K232) is an N6-(pyridoxal phosphate)lysine.

This sequence belongs to the SHMT family. As to quaternary structure, homodimer. Requires pyridoxal 5'-phosphate as cofactor.

The protein localises to the cytoplasm. The catalysed reaction is (6R)-5,10-methylene-5,6,7,8-tetrahydrofolate + glycine + H2O = (6S)-5,6,7,8-tetrahydrofolate + L-serine. The protein operates within one-carbon metabolism; tetrahydrofolate interconversion. It functions in the pathway amino-acid biosynthesis; glycine biosynthesis; glycine from L-serine: step 1/1. In terms of biological role, catalyzes the reversible interconversion of serine and glycine with tetrahydrofolate (THF) serving as the one-carbon carrier. This reaction serves as the major source of one-carbon groups required for the biosynthesis of purines, thymidylate, methionine, and other important biomolecules. Also exhibits THF-independent aldolase activity toward beta-hydroxyamino acids, producing glycine and aldehydes, via a retro-aldol mechanism. This Ehrlichia canis (strain Jake) protein is Serine hydroxymethyltransferase.